We begin with the raw amino-acid sequence, 282 residues long: NADPH-dependent 7-cyano-7-deazaguanine reductase (282 aa).

90 to 92 (IES) lines the substrate pocket. 92–93 (SK) lines the NADPH pocket. The Thioimide intermediate role is filled by Cys190. The active-site Proton donor is Asp197. Position 229 to 230 (229 to 230 (HE)) interacts with substrate. An NADPH-binding site is contributed by 258 to 259 (RG).

It belongs to the GTP cyclohydrolase I family. QueF type 2 subfamily. As to quaternary structure, homodimer.

It localises to the cytoplasm. It carries out the reaction 7-aminomethyl-7-carbaguanine + 2 NADP(+) = 7-cyano-7-deazaguanine + 2 NADPH + 3 H(+). It participates in tRNA modification; tRNA-queuosine biosynthesis. In terms of biological role, catalyzes the NADPH-dependent reduction of 7-cyano-7-deazaguanine (preQ0) to 7-aminomethyl-7-deazaguanine (preQ1). The chain is NADPH-dependent 7-cyano-7-deazaguanine reductase from Aeromonas salmonicida (strain A449).